The sequence spans 2542 residues: Highly reducing polyketide synthase (2542 aa).

One can recognise a Ketosynthase family 3 (KS3) domain in the interval 7 to 435 (PEPIAIVGMA…GANAHAILDA (429 aa)). Active-site for beta-ketoacyl synthase activity residues include Cys-182, His-317, and His-357. The region spanning 545–872 (FVFTGQGAQW…NLVGSLFLSG (328 aa)) is the Malonyl-CoA:ACP transacylase (MAT) domain. An N-terminal hotdog fold region spans residues 927–1062 (HDLLGSRIPG…TTNETLRINS (136 aa)). Residues 927–1224 (HDLLGSRIPG…FLSLETATKE (298 aa)) form the PKS/mFAS DH domain. The Proton acceptor; for dehydratase activity role is filled by His-959. Residues 1072–1224 (NKDSYVRRWY…FLSLETATKE (153 aa)) are C-terminal hotdog fold. Asp-1137 functions as the Proton donor; for dehydratase activity in the catalytic mechanism. Positions 1275 to 1574 (LTQLAIRSVV…AGADIMLDDY (300 aa)) are methyltransferase (CMet) domain. Residues 1606-1634 (VNGTNGINSTNSVNVTNDTSGINDTNRMN) are disordered. In terms of domain architecture, Enoyl reductase (ER) spans 1866 to 2186 (GKANSFYFES…QGDSVGSVVL (321 aa)). One can recognise a Ketoreductase (KR) domain in the interval 2209–2389 (ASYLLVGCLG…QAMSMALGMI (181 aa)).

Pantetheine 4'-phosphate serves as cofactor.

It participates in antifungal biosynthesis. Functionally, highly reducing polyketide synthase; part of the gene cluster that mediates the biosynthesis of the tetrahydropyranyl antifungal agent lanomycin that acts as an inhibitor of CYP51 and blocks the ergosterol biosynthesis. The biosynthesis probably begins with the formation of an hexaketide, followed by methionine mediated alkylation of C-2 and C-6, and methylation of the reduced C-3 oxygen, pyran forming reductive ring closure, oxygenation of C-4, beta-keto reduction, enoyl reduction and dehydration of the remaining oxygens, and finally, acylation with glycine to complete the biosynthesis. This Pyrenophora dematioidea (Helminthosporium dematioideum) protein is Highly reducing polyketide synthase.